Here is a 260-residue protein sequence, read N- to C-terminus: Adenosylcobinamide-GDP ribazoletransferase (260 aa).

The next 7 membrane-spanning stretches (helical) occupy residues 42-62, 64-84, 117-137, 144-164, 192-212, 214-234, and 240-260; these read PLAGGILGLLAGVALLIANAI, LPPLAAALIAIGALAAMTGAL, FAALTLVIWTSVKASLLMAII, YALLALIGTEAASRAGMLAFW, GLGLALLAIGFLPSGGMVALI, ALVLMTVVLFGFARLCMAKIG, and TLGAAQQIGSLAALIGLVMAL.

Belongs to the CobS family. Mg(2+) serves as cofactor.

It is found in the cell inner membrane. The catalysed reaction is alpha-ribazole + adenosylcob(III)inamide-GDP = adenosylcob(III)alamin + GMP + H(+). The enzyme catalyses alpha-ribazole 5'-phosphate + adenosylcob(III)inamide-GDP = adenosylcob(III)alamin 5'-phosphate + GMP + H(+). The protein operates within cofactor biosynthesis; adenosylcobalamin biosynthesis; adenosylcobalamin from cob(II)yrinate a,c-diamide: step 7/7. In terms of biological role, joins adenosylcobinamide-GDP and alpha-ribazole to generate adenosylcobalamin (Ado-cobalamin). Also synthesizes adenosylcobalamin 5'-phosphate from adenosylcobinamide-GDP and alpha-ribazole 5'-phosphate. The protein is Adenosylcobinamide-GDP ribazoletransferase of Brucella ovis (strain ATCC 25840 / 63/290 / NCTC 10512).